Here is a 727-residue protein sequence, read N- to C-terminus: Translation initiation factor IF-2, mitochondrial (727 aa).

The transit peptide at 1–29 directs the protein to the mitochondrion; it reads MNRKILKLENLLRFHTICRQLHSLCQRRM. The region spanning 178–348 is the tr-type G domain; the sequence is PRSPVVTIMG…IALAEMLELK (171 aa). The tract at residues 187–194 is G1; sequence GHVDHGKT. 187 to 194 contributes to the GTP binding site; the sequence is GHVDHGKT. A G2 region spans residues 212–216; it reads GITQH. Residues 234-237 and 288-291 contribute to the GTP site; these read DTPG and NKCD. The segment at 234–237 is G3; the sequence is DTPG. The G4 stretch occupies residues 288–291; that stretch reads NKCD. The segment at 324–326 is G5; that stretch reads SAL. The residue at position 688 (threonine 688) is a Phosphothreonine.

It belongs to the TRAFAC class translation factor GTPase superfamily. Classic translation factor GTPase family. IF-2 subfamily. In terms of assembly, monomer.

The protein resides in the mitochondrion. In terms of biological role, one of the essential components for the initiation of protein synthesis. Protects formylmethionyl-tRNA from spontaneous hydrolysis and promotes its binding to the 30S ribosomal subunits. Also involved in the hydrolysis of GTP during the formation of the 70S ribosomal complex. The sequence is that of Translation initiation factor IF-2, mitochondrial (MTIF2) from Bos taurus (Bovine).